A 492-amino-acid polypeptide reads, in one-letter code: Probable cobyric acid synthase (492 aa).

Positions 252–444 (PIEVNIVKFS…FHGILENFEF (193 aa)) constitute a GATase cobBQ-type domain. The active-site Nucleophile is the Cys330. His436 is a catalytic residue.

The protein belongs to the CobB/CobQ family. CobQ subfamily.

Its pathway is cofactor biosynthesis; adenosylcobalamin biosynthesis. In terms of biological role, catalyzes amidations at positions B, D, E, and G on adenosylcobyrinic A,C-diamide. NH(2) groups are provided by glutamine, and one molecule of ATP is hydrogenolyzed for each amidation. This chain is Probable cobyric acid synthase, found in Methanococcus maripaludis (strain C7 / ATCC BAA-1331).